Here is a 365-residue protein sequence, read N- to C-terminus: tRNA 2-selenouridine synthase (365 aa).

One can recognise a Rhodanese domain in the interval 12–136; it reads FLHDVPLLDV…LRMFLIDTTQ (125 aa). The active-site S-selanylcysteine intermediate is the cysteine 95.

The protein belongs to the SelU family. As to quaternary structure, monomer.

The catalysed reaction is 5-methylaminomethyl-2-thiouridine(34) in tRNA + selenophosphate + (2E)-geranyl diphosphate + H2O + H(+) = 5-methylaminomethyl-2-selenouridine(34) in tRNA + (2E)-thiogeraniol + phosphate + diphosphate. The enzyme catalyses 5-methylaminomethyl-2-thiouridine(34) in tRNA + (2E)-geranyl diphosphate = 5-methylaminomethyl-S-(2E)-geranyl-thiouridine(34) in tRNA + diphosphate. It carries out the reaction 5-methylaminomethyl-S-(2E)-geranyl-thiouridine(34) in tRNA + selenophosphate + H(+) = 5-methylaminomethyl-2-(Se-phospho)selenouridine(34) in tRNA + (2E)-thiogeraniol. It catalyses the reaction 5-methylaminomethyl-2-(Se-phospho)selenouridine(34) in tRNA + H2O = 5-methylaminomethyl-2-selenouridine(34) in tRNA + phosphate. In terms of biological role, involved in the post-transcriptional modification of the uridine at the wobble position (U34) of tRNA(Lys), tRNA(Glu) and tRNA(Gln). Catalyzes the conversion of 2-thiouridine (S2U-RNA) to 2-selenouridine (Se2U-RNA). Acts in a two-step process involving geranylation of 2-thiouridine (S2U) to S-geranyl-2-thiouridine (geS2U) and subsequent selenation of the latter derivative to 2-selenouridine (Se2U) in the tRNA chain. The protein is tRNA 2-selenouridine synthase of Verminephrobacter eiseniae (strain EF01-2).